Consider the following 144-residue polypeptide: Large ribosomal subunit protein uL15 (144 aa).

The disordered stretch occupies residues 1 to 57 (MKLNDLSPAPGSRREKHRPGRGIGSGLGKTGGRGHKGQTSRSGGTIAPGFEGGQQPL). The segment covering 21-31 (RGIGSGLGKTG) has biased composition (gly residues).

The protein belongs to the universal ribosomal protein uL15 family. In terms of assembly, part of the 50S ribosomal subunit.

In terms of biological role, binds to the 23S rRNA. In Pseudomonas fluorescens (strain ATCC BAA-477 / NRRL B-23932 / Pf-5), this protein is Large ribosomal subunit protein uL15.